A 314-amino-acid chain; its full sequence is Ribosomal protein L11 methyltransferase (314 aa).

Residues T164, G185, D207, and N249 each coordinate S-adenosyl-L-methionine.

This sequence belongs to the methyltransferase superfamily. PrmA family.

The protein localises to the cytoplasm. The catalysed reaction is L-lysyl-[protein] + 3 S-adenosyl-L-methionine = N(6),N(6),N(6)-trimethyl-L-lysyl-[protein] + 3 S-adenosyl-L-homocysteine + 3 H(+). Methylates ribosomal protein L11. The protein is Ribosomal protein L11 methyltransferase of Clostridium beijerinckii (strain ATCC 51743 / NCIMB 8052) (Clostridium acetobutylicum).